Reading from the N-terminus, the 109-residue chain is COX assembly mitochondrial protein 2 (109 aa).

Residues 10–54 (FHSCLDFINALDKCHQKEYYKRIFGLCNNEKDALNKCLKEASLNN) enclose the CHCH domain. 2 consecutive short sequence motifs (cx9C motif) follow at residues 13 to 23 (CLDFINALDKC) and 36 to 46 (CNNEKDALNKC). Disulfide bonds link cysteine 13/cysteine 46 and cysteine 23/cysteine 36.

The protein belongs to the CMC family. In terms of assembly, interacts with CMC1.

It localises to the mitochondrion inner membrane. The protein resides in the mitochondrion intermembrane space. In terms of biological role, required for mitochondrial cytochrome c oxidase (COX) assembly and respiration. May be involved in copper trafficking and distribution to mitochondrial COX and SOD1. The protein is COX assembly mitochondrial protein 2 (CMC2) of Saccharomyces cerevisiae (strain ATCC 204508 / S288c) (Baker's yeast).